Consider the following 426-residue polypeptide: MLLSKYFLPVLKEEPSEAQVTSHKLMLRSGMIRQQAAGIYTWLPLGLKVLKNIENIVRLNMNKAGALEVLMPCIQPAHLWMESGRFDNYGKEMLKFQDRHDNTLLFGPTNEDMITDIFRHNIKSYKDLPKNLYHIQWKFRDEIRPRFGVMRGREFLMKDAYSFDINEENAVKTYNQMYKAYINAFRDLGVFVIPVIADNGPIGGNLSHEFHIIAETGESTIYYDKKFKTLKDNPDIDVEEIKSWYAAAEEKYEVNKLPISEQEITSSKGIEVGHIFYIGSKYSVNMNALINDEYGKLTPIEMSSYGIGISRLVAAIIEANCDEKGIIWPSSVAPFKVSLINLNIHDSKCVELAEMAYKELSDKNIEVLYDDTEARPGSKFATHDLIGSPHQIIIGPKKAANNIVELKDRKSGVIEDIEVGSLMSVL.

It belongs to the class-II aminoacyl-tRNA synthetase family. ProS type 2 subfamily. In terms of assembly, homodimer.

The protein localises to the cytoplasm. The enzyme catalyses tRNA(Pro) + L-proline + ATP = L-prolyl-tRNA(Pro) + AMP + diphosphate. In terms of biological role, catalyzes the attachment of proline to tRNA(Pro) in a two-step reaction: proline is first activated by ATP to form Pro-AMP and then transferred to the acceptor end of tRNA(Pro). This is Proline--tRNA ligase from Rickettsia africae (strain ESF-5).